We begin with the raw amino-acid sequence, 308 residues long: Glycerol-3-phosphate dehydrogenase [NAD(P)+] (308 aa).

Positions 13, 33, and 81 each coordinate NADPH. Sn-glycerol 3-phosphate is bound by residues Lys81 and Gly109. Ala113 is a binding site for NADPH. Sn-glycerol 3-phosphate contacts are provided by Lys163, Asp216, Ser226, Arg227, and Asn228. Lys163 functions as the Proton acceptor in the catalytic mechanism. Residue Arg227 participates in NADPH binding. Glu253 is a binding site for NADPH.

This sequence belongs to the NAD-dependent glycerol-3-phosphate dehydrogenase family.

The protein localises to the cytoplasm. It carries out the reaction sn-glycerol 3-phosphate + NAD(+) = dihydroxyacetone phosphate + NADH + H(+). The enzyme catalyses sn-glycerol 3-phosphate + NADP(+) = dihydroxyacetone phosphate + NADPH + H(+). Its pathway is membrane lipid metabolism; glycerophospholipid metabolism. Its function is as follows. Catalyzes the reduction of the glycolytic intermediate dihydroxyacetone phosphate (DHAP) to sn-glycerol 3-phosphate (G3P), the key precursor for phospholipid synthesis. The sequence is that of Glycerol-3-phosphate dehydrogenase [NAD(P)+] from Thermosynechococcus vestitus (strain NIES-2133 / IAM M-273 / BP-1).